A 165-amino-acid chain; its full sequence is 6,7-dimethyl-8-ribityllumazine synthase (165 aa).

Residues Phe-24, 62–64 (AFE), and 86–88 (AVI) each bind 5-amino-6-(D-ribitylamino)uracil. Residue 91-92 (DT) coordinates (2S)-2-hydroxy-3-oxobutyl phosphate. His-94 functions as the Proton donor in the catalytic mechanism. Phe-119 provides a ligand contact to 5-amino-6-(D-ribitylamino)uracil. Position 133 (Arg-133) interacts with (2S)-2-hydroxy-3-oxobutyl phosphate.

It belongs to the DMRL synthase family.

It carries out the reaction (2S)-2-hydroxy-3-oxobutyl phosphate + 5-amino-6-(D-ribitylamino)uracil = 6,7-dimethyl-8-(1-D-ribityl)lumazine + phosphate + 2 H2O + H(+). The protein operates within cofactor biosynthesis; riboflavin biosynthesis; riboflavin from 2-hydroxy-3-oxobutyl phosphate and 5-amino-6-(D-ribitylamino)uracil: step 1/2. Functionally, catalyzes the formation of 6,7-dimethyl-8-ribityllumazine by condensation of 5-amino-6-(D-ribitylamino)uracil with 3,4-dihydroxy-2-butanone 4-phosphate. This is the penultimate step in the biosynthesis of riboflavin. The protein is 6,7-dimethyl-8-ribityllumazine synthase of Prochlorococcus marinus (strain MIT 9303).